The sequence spans 303 residues: N-acetyl-D-glucosamine kinase (303 aa).

ATP contacts are provided by residues 4–11 (GFDIGGTK) and 133–140 (GVGGGLVL). Zn(2+) contacts are provided by histidine 157, cysteine 177, cysteine 179, and cysteine 184.

The protein belongs to the ROK (NagC/XylR) family. NagK subfamily.

The catalysed reaction is N-acetyl-D-glucosamine + ATP = N-acetyl-D-glucosamine 6-phosphate + ADP + H(+). Its pathway is cell wall biogenesis; peptidoglycan recycling. Functionally, catalyzes the phosphorylation of N-acetyl-D-glucosamine (GlcNAc) derived from cell-wall degradation, yielding GlcNAc-6-P. The protein is N-acetyl-D-glucosamine kinase of Salmonella paratyphi B (strain ATCC BAA-1250 / SPB7).